We begin with the raw amino-acid sequence, 60 residues long: MRIHYLLFTFLLVLLSPLAAFSQKINEPVSCIRNGGICQYRCIGLRHKIGTCGSPFKCCK.

A signal peptide spans Met-1–Ser-22. Residues Gln-23–Ile-25 constitute a propeptide that is removed on maturation. Disulfide bonds link Cys-31-Cys-58, Cys-38-Cys-52, and Cys-42-Cys-59.

This sequence belongs to the beta-defensin family. Most highly expressed in testis and heart.

The protein resides in the secreted. Functionally, a synthetic peptide displays antimicrobial activities against S.aureus, P.aeruginosa, E.coli and B.cepacia. The antimicrobial activity against S.aureus, E.coli and B.cepacia is reduced in raised concentration of NaCl, but its action against P.aeruginosa is independent of NaCl concentration. The protein is Beta-defensin 8 (Defb8) of Mus musculus (Mouse).